Here is a 418-residue protein sequence, read N- to C-terminus: Serine hydroxymethyltransferase (418 aa).

Residues leucine 120 and 124-126 (GHL) each bind (6S)-5,6,7,8-tetrahydrofolate. Lysine 229 carries the N6-(pyridoxal phosphate)lysine modification. (6S)-5,6,7,8-tetrahydrofolate is bound at residue 353 to 355 (SPF).

Belongs to the SHMT family. In terms of assembly, homodimer. It depends on pyridoxal 5'-phosphate as a cofactor.

The protein localises to the cytoplasm. The enzyme catalyses (6R)-5,10-methylene-5,6,7,8-tetrahydrofolate + glycine + H2O = (6S)-5,6,7,8-tetrahydrofolate + L-serine. Its pathway is one-carbon metabolism; tetrahydrofolate interconversion. It functions in the pathway amino-acid biosynthesis; glycine biosynthesis; glycine from L-serine: step 1/1. Its function is as follows. Catalyzes the reversible interconversion of serine and glycine with tetrahydrofolate (THF) serving as the one-carbon carrier. This reaction serves as the major source of one-carbon groups required for the biosynthesis of purines, thymidylate, methionine, and other important biomolecules. Also exhibits THF-independent aldolase activity toward beta-hydroxyamino acids, producing glycine and aldehydes, via a retro-aldol mechanism. This chain is Serine hydroxymethyltransferase, found in Psychrobacter arcticus (strain DSM 17307 / VKM B-2377 / 273-4).